A 473-amino-acid polypeptide reads, in one-letter code: Adenosylhomocysteinase (473 aa).

Substrate-binding residues include T64, D139, and E199. NAD(+) is bound at residue 200 to 202; it reads TTT. The substrate site is built by K229 and D233. NAD(+) is bound by residues N234, 263-268, E286, N321, 342-344, and N387; these read GYGDVG and IGH.

The protein belongs to the adenosylhomocysteinase family. The cofactor is NAD(+).

Its subcellular location is the cytoplasm. The enzyme catalyses S-adenosyl-L-homocysteine + H2O = L-homocysteine + adenosine. Its pathway is amino-acid biosynthesis; L-homocysteine biosynthesis; L-homocysteine from S-adenosyl-L-homocysteine: step 1/1. Functionally, may play a key role in the regulation of the intracellular concentration of adenosylhomocysteine. This chain is Adenosylhomocysteinase, found in Paraburkholderia phymatum (strain DSM 17167 / CIP 108236 / LMG 21445 / STM815) (Burkholderia phymatum).